We begin with the raw amino-acid sequence, 471 residues long: Nitrosourea synthase (471 aa).

The HO-like stretch occupies residues 177 to 328 (MWLVQFAPDF…GRMAREKIIK (152 aa)). Fe(2+)-binding residues include E189, E215, H225, E281, H311, D315, H318, H407, H409, and H448. The tract at residues 397–459 (VEPRGELSNT…ANIESDECVY (63 aa)) is cupin.

As to quaternary structure, homodimer. Fe(2+) is required as a cofactor.

The enzyme catalyses N(omega)-methyl-L-arginine + 2 NADH + 3 O2 + H(+) = N(delta)-hydroxy-N(omega)-methyl-N(omega)-nitroso-L-citrulline + 2 NAD(+) + 3 H2O. It catalyses the reaction N(omega)-methyl-L-arginine + NADH + O2 + H(+) = N(delta)-hydroxy-N(omega)-methyl-L-arginine + NAD(+) + H2O. It carries out the reaction N(delta)-hydroxy-N(omega)-methyl-L-arginine + NADH + O2 = N(delta),N(omega')-dihydroxy-N(omega)-methyl-L-arginine + NAD(+) + H2O. The catalysed reaction is N(delta),N(omega')-dihydroxy-N(omega)-methyl-L-arginine + O2 = N(delta)-hydroxy-N(omega)-methyl-N(omega)-nitroso-L-citrulline + H2O. The enzyme catalyses 2 N(delta)-hydroxy-N(omega)-methyl-N(omega)-nitroso-L-citrulline + AH2 = 2 N(delta)-hydroxy-N(omega)-methyl-L-citrulline + 2 nitric oxide + A. It functions in the pathway antibiotic biosynthesis. Functionally, involved in the biosynthesis of the glucosamine-nitrosourea antibiotic streptozotocin (SZN). Catalyzes a complex multi-step reaction: the overall reaction is an oxidative rearrangement of the guanidine group of N(omega)-methyl-L-arginine (L-NMA), generating an N-nitrosourea product. SznF first hydroxylates L-NMA to form N(delta)-hydroxy-N(omega)-methyl-L-arginine (L-HMA), which is further hydroxylated to give N(delta)-hydroxy-N(omega)-hydroxy-N(omega)-methyl-L-arginine (L-DHMA). Subsequently, an oxidative rearrangement converts this intermediate to N(delta)-hydroxy-N(omega)-methyl-N(omega)-nitroso-L-citrulline. This product is unstable, and degrades non-enzymically into nitric oxide and the denitrosated product N(delta)-hydroxy-N(omega)-methyl-L-citrulline. In Streptomyces achromogenes subsp. streptozoticus, this protein is Nitrosourea synthase.